The sequence spans 304 residues: Aspartate carbamoyltransferase catalytic subunit (304 aa).

2 residues coordinate carbamoyl phosphate: R56 and T57. K85 contacts L-aspartate. Positions 106, 134, and 137 each coordinate carbamoyl phosphate. L-aspartate-binding residues include R167 and R226. Positions 265 and 266 each coordinate carbamoyl phosphate.

The protein belongs to the aspartate/ornithine carbamoyltransferase superfamily. ATCase family. As to quaternary structure, heterooligomer of catalytic and regulatory chains.

The catalysed reaction is carbamoyl phosphate + L-aspartate = N-carbamoyl-L-aspartate + phosphate + H(+). The protein operates within pyrimidine metabolism; UMP biosynthesis via de novo pathway; (S)-dihydroorotate from bicarbonate: step 2/3. Functionally, catalyzes the condensation of carbamoyl phosphate and aspartate to form carbamoyl aspartate and inorganic phosphate, the committed step in the de novo pyrimidine nucleotide biosynthesis pathway. The chain is Aspartate carbamoyltransferase catalytic subunit from Picrophilus torridus (strain ATCC 700027 / DSM 9790 / JCM 10055 / NBRC 100828 / KAW 2/3).